Reading from the N-terminus, the 538-residue chain is MLSRIEQELAQLGITNVKEIVHNPSYEQLFEEEMKPGLDGFEKGVLTNSGAVAVDTGIFTGRSPKDKYIVYDETTKDNVWWTSEAVKNDNKPMSQSTWENLKDVVTHQLSNKRLFVIDAFCGASKTHRLAVRIITEVAWQAHFVKNMFIRPTADELKVFEPNFVVMNGSKVTNPNWQAQGLNSENFVAFNLTERIQLIGGTWYGGEMKKGMFSMMNYLLPLKNVASMHCSANVGKEGDVAVFFGLSGTGKTTLSTDPKRKLIGDDEHGWDEHGVFNYEGGCYAKTINLSEENEPDIYRAIRRDALLENVVVAEDGSIDFADKSKTENTRVSYPIYHIDNIVEPVSKAGHAQKVIFLTADAFGVLPPVAKLTPEQTKYYFLSGFTAKLAGTERGITEPTPTFSACFGAAFLSLHPTKYAEVLVQRMEAAGSQAYLVNTGWNGTGKRISIKDTRGIIDAILDGSIEKATTHALPVFDLRVPDALPGVDTAILDPRDTYAEAAEWHAKAEDLAARFVKNFEKYTTNEEGKALVAAGPQLSK.

Substrate-binding residues include R62, Y203, and K209. ATP is bound by residues K209, H228, and 244–252 (GLSGTGKTT). Residues K209 and H228 each coordinate Mn(2+). D265 is a binding site for Mn(2+). ATP contacts are provided by residues E293, R329, 445–446 (RI), and T451. Position 329 (R329) interacts with substrate.

It belongs to the phosphoenolpyruvate carboxykinase (ATP) family. As to quaternary structure, monomer. The cofactor is Mn(2+).

It localises to the cytoplasm. It catalyses the reaction oxaloacetate + ATP = phosphoenolpyruvate + ADP + CO2. Its pathway is carbohydrate biosynthesis; gluconeogenesis. Its function is as follows. Involved in the gluconeogenesis. Catalyzes the conversion of oxaloacetate (OAA) to phosphoenolpyruvate (PEP) through direct phosphoryl transfer between the nucleoside triphosphate and OAA. This chain is Phosphoenolpyruvate carboxykinase (ATP), found in Haemophilus ducreyi (strain 35000HP / ATCC 700724).